We begin with the raw amino-acid sequence, 308 residues long: Ribonuclease HIII (308 aa).

An RNase H type-2 domain is found at aspartate 92–leucine 308. Positions 98, 99, and 204 each coordinate a divalent metal cation.

This sequence belongs to the RNase HII family. RnhC subfamily. Requires Mn(2+) as cofactor. It depends on Mg(2+) as a cofactor.

It is found in the cytoplasm. It catalyses the reaction Endonucleolytic cleavage to 5'-phosphomonoester.. Endonuclease that specifically degrades the RNA of RNA-DNA hybrids. In Oceanobacillus iheyensis (strain DSM 14371 / CIP 107618 / JCM 11309 / KCTC 3954 / HTE831), this protein is Ribonuclease HIII.